Here is a 21-residue protein sequence, read N- to C-terminus: Large ribosomal subunit protein uL10 (21 aa).

It belongs to the universal ribosomal protein uL10 family. In terms of assembly, part of the ribosomal stalk of the 50S ribosomal subunit. The N-terminus interacts with L11 and the large rRNA to form the base of the stalk. The C-terminus forms an elongated spine to which L12 dimers bind in a sequential fashion forming a multimeric L10(L12)X complex.

Forms part of the ribosomal stalk, playing a central role in the interaction of the ribosome with GTP-bound translation factors. The sequence is that of Large ribosomal subunit protein uL10 (rplJ) from Proteus vulgaris.